A 497-amino-acid polypeptide reads, in one-letter code: uncharacterized protein (497 aa).

11 helical membrane passes run 91 to 111 (WVGT…STLL), 119 to 139 (VTSA…LVHS), 149 to 169 (LLGI…AQWY), 179 to 199 (AFLV…SYGL), 215 to 235 (ILFI…FIHI), 283 to 303 (MYLY…LSNF), 319 to 339 (LLMN…FGLI), 347 to 367 (MDIA…IAFA), 374 to 394 (LAGY…LSCI), 406 to 426 (FMSA…PQTF), and 439 to 459 (VSFV…YAVN).

The protein belongs to the major facilitator superfamily. Allantoate permease family.

The protein resides in the golgi apparatus. It is found in the membrane. This is an uncharacterized protein from Schizosaccharomyces pombe (strain 972 / ATCC 24843) (Fission yeast).